A 552-amino-acid polypeptide reads, in one-letter code: Hydroxylamine reductase (552 aa).

Positions 5, 8, 20, and 27 each coordinate [2Fe-2S] cluster. Residues histidine 251, glutamate 275, cysteine 319, cysteine 407, cysteine 435, cysteine 460, glutamate 494, and lysine 496 each contribute to the hybrid [4Fe-2O-2S] cluster site. Cysteine 407 bears the Cysteine persulfide mark.

Belongs to the HCP family. It depends on [2Fe-2S] cluster as a cofactor. The cofactor is hybrid [4Fe-2O-2S] cluster.

It is found in the cytoplasm. The catalysed reaction is A + NH4(+) + H2O = hydroxylamine + AH2 + H(+). In terms of biological role, catalyzes the reduction of hydroxylamine to form NH(3) and H(2)O. This is Hydroxylamine reductase from Shigella flexneri.